A 318-amino-acid chain; its full sequence is Transaldolase (318 aa).

Lys131 acts as the Schiff-base intermediate with substrate in catalysis.

The protein belongs to the transaldolase family. Type 1 subfamily. Homodimer.

The protein resides in the cytoplasm. It carries out the reaction D-sedoheptulose 7-phosphate + D-glyceraldehyde 3-phosphate = D-erythrose 4-phosphate + beta-D-fructose 6-phosphate. It participates in carbohydrate degradation; pentose phosphate pathway; D-glyceraldehyde 3-phosphate and beta-D-fructose 6-phosphate from D-ribose 5-phosphate and D-xylulose 5-phosphate (non-oxidative stage): step 2/3. Functionally, transaldolase is important for the balance of metabolites in the pentose-phosphate pathway. The chain is Transaldolase from Cellvibrio japonicus (strain Ueda107) (Pseudomonas fluorescens subsp. cellulosa).